Here is a 57-residue protein sequence, read N- to C-terminus: COP9 signalosome complex subunit 9 (57 aa).

Residue threonine 26 is modified to Phosphothreonine.

The protein belongs to the CSN9 family. Component of the CSN complex, composed of COPS1/GPS1, COPS2, COPS3, COPS4, COPS5, COPS6, COPS7 (COPS7A or COPS7B), COPS8 and COPS9. In the complex, it interacts directly with COPS3, COPS5 and COPS6.

It localises to the nucleus. It is found in the cytoplasm. The protein localises to the nucleoplasm. In terms of biological role, component of the COP9 signalosome complex (CSN), a complex involved in various cellular and developmental processes. The CSN complex is an essential regulator of the ubiquitin (Ubl) conjugation pathway by mediating the deneddylation of the cullin subunits of SCF-type E3 ligase complexes, leading to decrease the Ubl ligase activity of SCF-type complexes such as SCF, CSA or DDB2. The complex is also involved in phosphorylation of p53/TP53, c-jun/JUN, IkappaBalpha/NFKBIA, ITPK1 and IRF8/ICSBP, possibly via its association with CK2 and PKD kinases. CSN-dependent phosphorylation of TP53 and JUN promotes and protects degradation by the Ubl system, respectively. Plays a role in cell proliferation. This Mus musculus (Mouse) protein is COP9 signalosome complex subunit 9.